We begin with the raw amino-acid sequence, 428 residues long: MDSLWGPGAGSHPFGVHNSRLSPDLCPGKIVLRALKESGAGMPEQDKDPRVQENPGDQRRVPEVTGDAPSAFRPLRDNGGLSPFVPGPGPLQTDLHAQRSEIRYNQTSQTSWTSSCTNRNAISSSYSSTGGLPGLKRRRGPASSHCQLTLSSSKTVSEDRPQAVSSGHTQCEKVAEIAPGQTLALRNDSSRSEASRPSTRKFPLLPRRRGEPLMLPPPVELGYRVTAEDLDWEKEAAFQCIKSALQVEDKAISDCRPSRPSHTLSSLATGASGLPAVSKAPSMDAQQERHKSQDCLGLVAPLASATEVPSTAPMSGEKHRPPGPLFSSSDPLPATSSHSQDSAQVTSLIPAPFPAASMDAGMRRTRPGTSAPAAAAAAPPPSTLNRTLGSLLEWMEALHISGPQPQLQQVPRGQNQRSQTSRTSSCPK.

5 disordered regions span residues Met-1–Pro-23, Lys-36–Leu-204, Asp-254–Gln-293, Thr-306–Leu-384, and Gly-402–Lys-428. Residues Glu-44 to Pro-62 show a composition bias toward basic and acidic residues. Positions Gln-106 to Thr-117 are enriched in low complexity. Composition is skewed to polar residues over residues Asn-118–Thr-129, Ser-144–Thr-155, Pro-260–Thr-269, Phe-326–Ser-347, and Pro-403–Asn-415. Low complexity predominate over residues Gln-416–Lys-428.

Belongs to the POM121 family.

This chain is Putative POM121-like protein 1 (POM121L1P), found in Homo sapiens (Human).